Reading from the N-terminus, the 465-residue chain is Endolysin PlyC, large catalytic subunit (465 aa).

A glycosidase activity region spans residues 2–205; it reads SKKYTQQQYE…GADPFTGGSI (204 aa). Disordered stretches follow at residues 204-226 and 289-309; these read SITG…ASSE and TNPN…LGSG. Polar residues-rich tracts occupy residues 213-226 and 289-307; these read SVGT…ASSE and TNPN…NDLG. One can recognise a Peptidase C51 domain in the interval 308-465; that stretch reads SGSDRVAANL…STLTGLITFK (158 aa). Catalysis depends on for amidase activity residues Cys333 and His420.

As to quaternary structure, part of the PlyC holoenzyme, which is composed of 1 PlyCA and 8 PlyCB assembled as a ring.

It catalyses the reaction Hydrolyzes the link between N-acetylmuramoyl residues and L-amino acid residues in certain cell-wall glycopeptides.. Component of the endolysin PlyC that degrades the host peptidoglycans and participates with the holin protein in the sequential events which lead to the programmed host cell lysis releasing the mature viral particles. Once the holin has permeabilized the host cell membrane, the endolysin can reach the periplasm and breaking down the peptidoglycan layer. When associated with the small subunit PlyCB, the large subunit PlyCA displays 2 catalytic activities, amidase and glycosyl hydrolase. Cleaves the amide bond between N-acetyl muramic acid and L-alanine in the host peptidoglycan. PlyC is an extremely potent endolysin. This is Endolysin PlyC, large catalytic subunit (orf11) from Streptococcus phage C1.